A 238-amino-acid polypeptide reads, in one-letter code: COMM domain-containing protein 10 homolog Vlet (238 aa).

The segment covering 43–77 (ASASATSSTVGTSVTTTGRVDSSTEENPTSNTEPE) has biased composition (low complexity). Residues 43–78 (ASASATSSTVGTSVTTTGRVDSSTEENPTSNTEPEY) form a disordered region. Residues 161 to 225 (VIEDVAWKLN…SIQGELDAML (65 aa)) enclose the COMM domain.

The protein belongs to the COMM domain-containing protein 10 family. In terms of assembly, component of the commander complex consisting of the CCC subcomplex and the retriever subcomplex. Component of the CCC subcomplex. Interacts with Smn; along with Sbat and Hez may form an accessory subcomplex involved in SMN complex function.

Functionally, scaffold protein in the commander complex that is essential for endosomal recycling of transmembrane cargos; the commander complex is composed of the CCC subcomplex and the retriever subcomplex. May modulate activity of cullin-RING E3 ubiquitin ligase (CRL) complexes. May down-regulate activation of NF-kappa-B. May have an accessory function in the survival motor neuron (SMN) complex. Required for neuromuscular function and organismal viability. The protein is COMM domain-containing protein 10 homolog Vlet of Drosophila melanogaster (Fruit fly).